A 149-amino-acid chain; its full sequence is Thioredoxin-like protein 4B (149 aa).

It belongs to the DIM1 family. In terms of assembly, homodimer. Interacts with the U5-102 kDa protein subunit of the spliceosome.

It is found in the nucleus. In terms of biological role, essential role in pre-mRNA splicing. Required in cell cycle progression for S/G(2) transition. The polypeptide is Thioredoxin-like protein 4B (Txnl4b) (Mus musculus (Mouse)).